The sequence spans 168 residues: Fusaric acid resistance protein FusE (168 aa).

Functionally, involved in the resistance (detoxification) of the fungal toxin fusaric acid. The polypeptide is Fusaric acid resistance protein FusE (fusE) (Burkholderia cepacia (Pseudomonas cepacia)).